Reading from the N-terminus, the 416-residue chain is Inositol polyphosphate multikinase (416 aa).

The tract at residues 1 to 38 (MATEPPSPLRVEAPGPPEMRTSPAIESTPEGTPQPAGG) is disordered. Position 2 is an N-acetylalanine (alanine 2). Phosphoserine is present on serine 7. Lysine 75 lines the ATP pocket. Position 82 (arginine 82) interacts with substrate. Residues 131-133 (EDV) and aspartate 144 each bind ATP. Substrate contacts are provided by residues lysine 146, 160-167 (KIQQQVSK), and glutamine 196. Positions 320–330 (RHRKIYTKKHH) match the Nuclear localization signal motif. Aspartate 385 lines the ATP pocket. Residue histidine 388 participates in substrate binding.

This sequence belongs to the inositol phosphokinase (IPK) family. It depends on Mg(2+) as a cofactor. As to expression, ubiquitous, with the highest expression in skeletal muscle, liver, placenta, lung, peripheral blood leukocytes, kidney, spleen and colon.

It is found in the nucleus. The enzyme catalyses 1D-myo-inositol 1,4,5-trisphosphate + 2 ATP = 1D-myo-inositol 1,3,4,5,6-pentakisphosphate + 2 ADP + 2 H(+). It carries out the reaction 1D-myo-inositol 1,3,4,6-tetrakisphosphate + ATP = 1D-myo-inositol 1,3,4,5,6-pentakisphosphate + ADP + H(+). It catalyses the reaction 1-octadecanoyl-2-(5Z,8Z,11Z,14Z)-eicosatetraenoyl-sn-glycero-3-phospho-1D-myo-inositol 4,5-bisphosphate + ATP = 1-octadecanoyl-2-(5Z,8Z,11Z,14Z-eicosatetraenoyl)-sn-glycero-3-phospho-(1D-myo-inositol 3,4,5-triphosphate) + ADP + H(+). The catalysed reaction is a 1,2-diacyl-sn-glycero-3-phospho-(1D-myo-inositol-4,5-bisphosphate) + ATP = a 1,2-diacyl-sn-glycero-3-phospho-(1D-myo-inositol-3,4,5-trisphosphate) + ADP + H(+). The enzyme catalyses 1D-myo-inositol 1,4,5,6-tetrakisphosphate + ATP = 1D-myo-inositol 1,3,4,5,6-pentakisphosphate + ADP + H(+). Its pathway is phospholipid metabolism; phosphatidylinositol metabolism. Inhibited by flavonoids that occupy the ATP-binding pocket. Inhibited by myricetin, quercetin, luteolin, kaempferol, isorhamnetin and diosmetin, and to a lesser degree by rhamnetin and apigenin. In terms of biological role, inositol phosphate kinase with a broad substrate specificity. Phosphorylates inositol 1,4,5-trisphosphate (Ins(1,4,5)P3) first to inositol 1,3,4,5-tetrakisphosphate and then to inositol 1,3,4,5,6-pentakisphosphate (Ins(1,3,4,5,6)P5). Phosphorylates inositol 1,3,4,6-tetrakisphosphate (Ins(1,3,4,6)P4). Phosphorylates inositol 1,4,5,6-tetrakisphosphate (Ins(1,4,5,6)P4). Phosphorylates glycero-3-phospho-1D-myo-inositol 4,5-bisphosphate to glycero-3-phospho-1D-myo-inositol 3,4,5-trisphosphate. Plays an important role in MLKL-mediated necroptosis via its role in the biosynthesis of inositol pentakisphosphate (InsP5) and inositol hexakisphosphate (InsP6). Binding of these highly phosphorylated inositol phosphates to MLKL mediates the release of an N-terminal auto-inhibitory region, leading to activation of the kinase. Essential for activated phospho-MLKL to oligomerize and localize to the cell membrane during necroptosis. Required for normal embryonic development, probably via its role in the biosynthesis of inositol 1,3,4,5,6-pentakisphosphate (Ins(1,3,4,5,6)P5) and inositol hexakisphosphate (InsP6). The polypeptide is Inositol polyphosphate multikinase (IPMK) (Homo sapiens (Human)).